A 103-amino-acid chain; its full sequence is Large ribosomal subunit protein bL21 (103 aa).

Belongs to the bacterial ribosomal protein bL21 family. In terms of assembly, part of the 50S ribosomal subunit. Contacts protein L20.

Its function is as follows. This protein binds to 23S rRNA in the presence of protein L20. This is Large ribosomal subunit protein bL21 from Psychromonas ingrahamii (strain DSM 17664 / CCUG 51855 / 37).